The following is a 308-amino-acid chain: Testis-specific Y-encoded protein 8 (308 aa).

This sequence belongs to the nucleosome assembly protein (NAP) family.

The protein resides in the cytoplasm. It is found in the nucleus. May be involved in sperm differentiation and proliferation. The sequence is that of Testis-specific Y-encoded protein 8 (TSPY8) from Homo sapiens (Human).